Reading from the N-terminus, the 453-residue chain is Endoglucanase A (453 aa).

Positions 1 to 26 (MNCRKYLLSGLAVFGLAATSAVAALS) are cleaved as a signal peptide. Aspartate 82 serves as the catalytic Nucleophile. The interval 115–126 (TTPTTRKPTTTP) is linker ('hinge') (Pro-Thr box). Histidine 417 is an active-site residue.

This sequence belongs to the glycosyl hydrolase 9 (cellulase E) family. As to quaternary structure, monomer.

It is found in the periplasm. The catalysed reaction is Endohydrolysis of (1-&gt;4)-beta-D-glucosidic linkages in cellulose, lichenin and cereal beta-D-glucans.. Its function is as follows. High levels of endoglucanase activity detected on acid-swollen cellulose, ball-milled cellulose, and carboxymethyl cellulose; moderate levels detected on filter paper, phosphoric acid-swollen cellulose, lichenan, and xylan. The polypeptide is Endoglucanase A (endA) (Fibrobacter succinogenes (Bacteroides succinogenes)).